The sequence spans 78 residues: Small ribosomal subunit protein bS18 (78 aa).

It belongs to the bacterial ribosomal protein bS18 family. As to quaternary structure, part of the 30S ribosomal subunit. Forms a tight heterodimer with protein bS6.

Functionally, binds as a heterodimer with protein bS6 to the central domain of the 16S rRNA, where it helps stabilize the platform of the 30S subunit. This chain is Small ribosomal subunit protein bS18, found in Thermobifida fusca (strain YX).